Here is a 121-residue protein sequence, read N- to C-terminus: RxLR effector protein PexRD2 (121 aa).

The N-terminal stretch at 1-20 (MRLSYVIVVIATSFLVTTEA) is a signal peptide. The RxLR-dEER motif lies at 38-56 (RLLRKHYTAAENDDDSEAR). The tract at residues 57–121 (ALNTEKMKTM…LNYVAEHTAV (65 aa)) is WY domain.

Belongs to the RxLR effector family. In terms of assembly, homodimer. Interacts with host MAPKKK epsilon (via its kinase domain).

The protein localises to the secreted. Its subcellular location is the host cytoplasm. The protein resides in the host nucleus. Effector that enhances P.infestans colonization of Nicotiana benthamiana leaves. Induces a weak Cell death response in N.benthamiana. PexRD2-induced cell death is dependent on SGT1, suggesting that PexRD2 is recognized by the plant immune system. Interacts with the kinase domain of the host MAPKKK epsilon, a positive regulator of cell death associated with plant immunity, and perturbs signaling pathways triggered by MAPKKK epsilon. The polypeptide is RxLR effector protein PexRD2 (Phytophthora infestans (strain T30-4) (Potato late blight agent)).